The sequence spans 324 residues: Putative 12-oxophytodienoate reductase-like protein 1 (324 aa).

Methionine 1 is subject to N-acetylmethionine. FMN is bound by residues 14–16 (PMA), alanine 47, and glutamine 89. Over residues 99–113 (QDCQPNGESPVSSTD) the composition is skewed to polar residues. Residues 99–128 (QDCQPNGESPVSSTDKPFADDPSNEFTPPR) are disordered. 160 to 163 (HGAH) is a substrate binding site. Tyrosine 165 serves as the catalytic Proton donor. Arginine 212 serves as a coordination point for FMN. Arginine 252 lines the substrate pocket. FMN contacts are provided by residues glycine 282 and 303–304 (GR).

Belongs to the NADH:flavin oxidoreductase/NADH oxidase family. FMN is required as a cofactor.

In terms of biological role, putative oxophytodienoate reductase that may be involved in the biosynthesis or metabolism of oxylipin signaling molecules. In Arabidopsis thaliana (Mouse-ear cress), this protein is Putative 12-oxophytodienoate reductase-like protein 1.